We begin with the raw amino-acid sequence, 410 residues long: Protein translocase subunit SecY 2 (410 aa).

The next 10 helical transmembrane spans lie at 2 to 22 (ILII…SAAL), 45 to 65 (FSIM…VQLL), 94 to 114 (LTLV…NTLT), 125 to 145 (FTII…MWLG), 147 to 167 (LITE…GILV), 188 to 208 (WIRF…IVWF), 241 to 261 (VIPV…LMFF), 284 to 304 (GVII…IVQI), 339 to 359 (YLSL…LLVA), and 366 to 386 (LQIG…IEIG).

The protein belongs to the SecY/SEC61-alpha family. In terms of assembly, component of the Sec protein translocase complex. Heterotrimer consisting of SecY, SecE and SecG subunits. The heterotrimers can form oligomers, although 1 heterotrimer is thought to be able to translocate proteins. Interacts with the ribosome. Interacts with SecDF, and other proteins may be involved. Interacts with SecA.

Its subcellular location is the cell membrane. In terms of biological role, the central subunit of the protein translocation channel SecYEG. Consists of two halves formed by TMs 1-5 and 6-10. These two domains form a lateral gate at the front which open onto the bilayer between TMs 2 and 7, and are clamped together by SecE at the back. The channel is closed by both a pore ring composed of hydrophobic SecY resides and a short helix (helix 2A) on the extracellular side of the membrane which forms a plug. The plug probably moves laterally to allow the channel to open. The ring and the pore may move independently. This is Protein translocase subunit SecY 2 from Lactobacillus kefiranofaciens subsp. kefiranofaciens.